A 312-amino-acid chain; its full sequence is Flavonol 3-sulfotransferase (312 aa).

Residue 59-64 coordinates 3'-phosphoadenylyl sulfate; the sequence is KSGTTW. His119 serves as the catalytic Proton acceptor. Residues Arg141, Ser149, Tyr207, and 277–279 contribute to the 3'-phosphoadenylyl sulfate site; that span reads RKG.

The protein belongs to the sulfotransferase 1 family. As to expression, highest in shoot tips and lowest in mature leaves and roots.

The protein localises to the cytoplasm. Functionally, sulfotransferase that utilizes 3'-phospho-5'-adenylyl sulfate (PAPS) as sulfonate donor to catalyze the sulfate conjugation of quercetin, rhamnetin and isorhamnetin but not kaempferol. O-sulfation of position 3 of flavonol. May play a role in auxin transport. The protein is Flavonol 3-sulfotransferase of Flaveria bidentis (Coastal plain yellowtops).